The chain runs to 284 residues: NAD kinase (284 aa).

Catalysis depends on Asp-71, which acts as the Proton acceptor. Residues 71–72, 144–145, Asp-174, 185–190, and Gln-242 each bind NAD(+); these read DG, ND, and TAYNLS.

This sequence belongs to the NAD kinase family. Requires a divalent metal cation as cofactor.

The protein localises to the cytoplasm. The catalysed reaction is NAD(+) + ATP = ADP + NADP(+) + H(+). Involved in the regulation of the intracellular balance of NAD and NADP, and is a key enzyme in the biosynthesis of NADP. Catalyzes specifically the phosphorylation on 2'-hydroxyl of the adenosine moiety of NAD to yield NADP. The protein is NAD kinase of Sulfurimonas denitrificans (strain ATCC 33889 / DSM 1251) (Thiomicrospira denitrificans (strain ATCC 33889 / DSM 1251)).